The primary structure comprises 111 residues: Secreted RxLR effector protein 82 (111 aa).

Positions 1–17 (MFHLYLLLVFETRYTCL) are cleaved as a signal peptide. Residues 28–31 (RWLR) carry the RxLR motif.

Belongs to the RxLR effector family.

The protein localises to the secreted. The protein resides in the host nucleus. Its function is as follows. Secreted effector that acts as an elicitor that induces cell death in host plant cells. This Plasmopara viticola (Downy mildew of grapevine) protein is Secreted RxLR effector protein 82.